A 558-amino-acid polypeptide reads, in one-letter code: Kelch-like protein 23 (558 aa).

In terms of domain architecture, BTB spans 36 to 104 (TDITLQCPSG…AYTSQIEITK (69 aa)). In terms of domain architecture, BACK spans 139–240 (CIGMHSFAEF…DPVYLKTALG (102 aa)). 6 Kelch repeats span residues 274 to 320 (TMYI…CLGP), 321 to 369 (NIYV…TLGG), 370 to 416 (CVYA…VLHD), 418 to 466 (IYVI…PFEN), 467 to 508 (KLYL…IMNG), and 510 to 557 (IYVT…CVYN).

This chain is Kelch-like protein 23 (KLHL23), found in Homo sapiens (Human).